Consider the following 79-residue polypeptide: Small ribosomal subunit protein bS16 (79 aa).

Belongs to the bacterial ribosomal protein bS16 family.

The sequence is that of Small ribosomal subunit protein bS16 from Hahella chejuensis (strain KCTC 2396).